A 188-amino-acid chain; its full sequence is Guanylate kinase (188 aa).

One can recognise a Guanylate kinase-like domain in the interval 8–188 (GRIVVLAGPS…AVAAISEILR (181 aa)). Residue 15-22 (GPSAVGKS) participates in ATP binding.

This sequence belongs to the guanylate kinase family.

The protein localises to the cytoplasm. It carries out the reaction GMP + ATP = GDP + ADP. Functionally, essential for recycling GMP and indirectly, cGMP. The sequence is that of Guanylate kinase from Corynebacterium jeikeium (strain K411).